The primary structure comprises 259 residues: Global transcriptional regulator CodY (259 aa).

Residues 1 to 155 (MNLLEKTRKI…GATVVGMEIL (155 aa)) form a GAF domain region. The segment at residues 203–222 (ASKIADRVGITRSVIVNALR) is a DNA-binding region (H-T-H motif). Residue S215 is modified to Phosphoserine.

The protein belongs to the CodY family.

The protein localises to the cytoplasm. Its function is as follows. DNA-binding global transcriptional regulator which is involved in the adaptive response to starvation and acts by directly or indirectly controlling the expression of numerous genes in response to nutrient availability. During rapid exponential growth, CodY is highly active and represses genes whose products allow adaptation to nutrient depletion. This Anoxybacillus flavithermus (strain DSM 21510 / WK1) protein is Global transcriptional regulator CodY.